Consider the following 830-residue polypeptide: Periplasmic nitrate reductase (830 aa).

The tat-type signal signal peptide spans 1–32; sequence MELNRRDFMKANAAVAAAAAAGITIPVKNVHA. The 57-residue stretch at 39-95 folds into the 4Fe-4S Mo/W bis-MGD-type domain; the sequence is IRWDKAPCRYCGTGCSVLVGTKDGRVVATQGDPDAEVNRGLNCIKGYFLSKIMYGAD. 4 residues coordinate [4Fe-4S] cluster: C46, C49, C53, and C81. Residues K83, Q151, N176, C180, 213–220, 244–248, M374, Q378, N484, 510–511, K533, D560, and 720–729 each bind Mo-bis(molybdopterin guanine dinucleotide); these read WGSNMAEM, STFEH, SD, and TGRVLEHWHT. F796 contributes to the substrate binding site. 2 residues coordinate Mo-bis(molybdopterin guanine dinucleotide): N804 and K821.

The protein belongs to the prokaryotic molybdopterin-containing oxidoreductase family. NasA/NapA/NarB subfamily. As to quaternary structure, component of the periplasmic nitrate reductase NapAB complex composed of NapA and NapB. [4Fe-4S] cluster serves as cofactor. Mo-bis(molybdopterin guanine dinucleotide) is required as a cofactor. Post-translationally, predicted to be exported by the Tat system. The position of the signal peptide cleavage has not been experimentally proven.

The protein resides in the periplasm. The catalysed reaction is 2 Fe(II)-[cytochrome] + nitrate + 2 H(+) = 2 Fe(III)-[cytochrome] + nitrite + H2O. Its function is as follows. Catalytic subunit of the periplasmic nitrate reductase complex NapAB. Receives electrons from NapB and catalyzes the reduction of nitrate to nitrite. This is Periplasmic nitrate reductase from Mannheimia succiniciproducens (strain KCTC 0769BP / MBEL55E).